Reading from the N-terminus, the 270-residue chain is Undecaprenyl-diphosphatase 2 (270 aa).

A run of 8 helical transmembrane segments spans residues 1–21 (MDLI…FLPV), 39–59 (QGLA…VWYF), 87–107 (WAVI…KGFI), 114–134 (PLVI…SDVV), 147–167 (LSWK…IPGT), 190–210 (FSFL…TLDL), 221–241 (AMGL…HFFL), and 247–267 (VGML…LVLF).

The protein belongs to the UppP family.

It localises to the cell inner membrane. It catalyses the reaction di-trans,octa-cis-undecaprenyl diphosphate + H2O = di-trans,octa-cis-undecaprenyl phosphate + phosphate + H(+). Its function is as follows. Catalyzes the dephosphorylation of undecaprenyl diphosphate (UPP). Confers resistance to bacitracin. In Stutzerimonas stutzeri (strain A1501) (Pseudomonas stutzeri), this protein is Undecaprenyl-diphosphatase 2.